The chain runs to 114 residues: uncharacterized protein (114 aa).

It is found in the mitochondrion. This is an uncharacterized protein from Arabidopsis thaliana (Mouse-ear cress).